The primary structure comprises 527 residues: SusD-like protein P25 (527 aa).

A signal peptide spans 1-15 (MKIQNIIVYVFLIFS). Residue cysteine 16 is the site of N-palmitoyl cysteine attachment. Cysteine 16 is lipidated: S-diacylglycerol cysteine.

Belongs to the SusD family.

The protein resides in the cell outer membrane. Polysaccharide-binding protein probably involved in ulvan degradation. Ulvan is the main polysaccharide component of the Ulvales (green seaweed) cell wall. It is composed of disaccharide building blocks comprising 3-sulfated rhamnose (Rha3S) linked to D-glucuronic acid (GlcA), L-iduronic acid (IduA), or D-xylose (Xyl). The SusD-like protein may mediate ulvan oligomer-binding before transport in the periplasm for further degradation. The chain is SusD-like protein P25 from Formosa agariphila (strain DSM 15362 / KCTC 12365 / LMG 23005 / KMM 3901 / M-2Alg 35-1).